The following is a 297-amino-acid chain: MSAVEAPSASQAIWPELTEDHPLSQLNSRLPTILSEAGHSQIWGVTLTYSTPPTFSTLIILQKFLRSVDNNVDEAATALGKTLKWRKDWGLDAPADKKEKENFGPDFEGLGYVTKIKKNDGGDEIVTWNVYGAVKDLKSTFGDLDRFLRWRVNLMEEAIAHLHLATTSTPIPDFNAGIDPHRMAQVHLYEGVSFLRMDPHVKAASKATIELMAANYPELLSRKFFVGVPLIMSWMFQAVRMFVSAETAKKFVVISYKENLANELGELEGVPKEYGGKGLSLGELQNQLRGEDAVTSS.

The region spanning 106–282 (DFEGLGYVTK…EYGGKGLSLG (177 aa)) is the CRAL-TRIO domain. Heme contacts are provided by tyrosine 131, arginine 151, histidine 187, tyrosine 189, and lysine 223.

It belongs to the SFH5 family. Heme b is required as a cofactor.

The protein resides in the cytoplasm. Its subcellular location is the endoplasmic reticulum membrane. It localises to the microsome membrane. It carries out the reaction a 1,2-diacyl-sn-glycero-3-phospho-(1D-myo-inositol)(in) = a 1,2-diacyl-sn-glycero-3-phospho-(1D-myo-inositol)(out). Its function is as follows. Non-classical phosphatidylinositol (PtdIns) transfer protein (PITP), which exhibits PtdIns-binding/transfer activity in the absence of detectable PtdCho-binding/transfer activity. Regulates PtdIns(4,5)P2 homeostasis at the plasma membrane. Heme-binding protein that may play a role in organic oxidant-induced stress responses. The chain is Phosphatidylinositol transfer protein SFH5 (SFH5) from Cryptococcus neoformans var. neoformans serotype D (strain B-3501A) (Filobasidiella neoformans).